A 953-amino-acid chain; its full sequence is Valine--tRNA ligase (953 aa).

The 'HIGH' region signature appears at 42-52 (PNVTGSLHMGH). Residues 554–558 (KMSKS) carry the 'KMSKS' region motif. Residue K557 coordinates ATP. The stretch at 884–952 (LIDKDAELDR…LEQQKATIAA (69 aa)) forms a coiled coil.

It belongs to the class-I aminoacyl-tRNA synthetase family. ValS type 1 subfamily. Monomer.

It is found in the cytoplasm. The enzyme catalyses tRNA(Val) + L-valine + ATP = L-valyl-tRNA(Val) + AMP + diphosphate. Functionally, catalyzes the attachment of valine to tRNA(Val). As ValRS can inadvertently accommodate and process structurally similar amino acids such as threonine, to avoid such errors, it has a 'posttransfer' editing activity that hydrolyzes mischarged Thr-tRNA(Val) in a tRNA-dependent manner. This is Valine--tRNA ligase from Vibrio cholerae serotype O1 (strain ATCC 39315 / El Tor Inaba N16961).